The chain runs to 916 residues: Isoleucine--tRNA ligase (916 aa).

Residues 57-67 (PYANGNLHMGH) carry the 'HIGH' region motif. Position 554 (E554) interacts with L-isoleucyl-5'-AMP. A 'KMSKS' region motif is present at residues 595-599 (KMSKS). ATP is bound at residue K598. Residues C885, C888, C905, and C908 each contribute to the Zn(2+) site.

This sequence belongs to the class-I aminoacyl-tRNA synthetase family. IleS type 1 subfamily. In terms of assembly, monomer. It depends on Zn(2+) as a cofactor.

It localises to the cytoplasm. The catalysed reaction is tRNA(Ile) + L-isoleucine + ATP = L-isoleucyl-tRNA(Ile) + AMP + diphosphate. Its function is as follows. Catalyzes the attachment of isoleucine to tRNA(Ile). As IleRS can inadvertently accommodate and process structurally similar amino acids such as valine, to avoid such errors it has two additional distinct tRNA(Ile)-dependent editing activities. One activity is designated as 'pretransfer' editing and involves the hydrolysis of activated Val-AMP. The other activity is designated 'posttransfer' editing and involves deacylation of mischarged Val-tRNA(Ile). This chain is Isoleucine--tRNA ligase, found in Staphylococcus haemolyticus (strain JCSC1435).